Consider the following 356-residue polypeptide: Ferrochelatase (356 aa).

Fe cation-binding residues include H214 and E295.

It belongs to the ferrochelatase family.

It is found in the cytoplasm. The enzyme catalyses heme b + 2 H(+) = protoporphyrin IX + Fe(2+). The protein operates within porphyrin-containing compound metabolism; protoheme biosynthesis; protoheme from protoporphyrin-IX: step 1/1. Its function is as follows. Catalyzes the ferrous insertion into protoporphyrin IX. In Paraburkholderia xenovorans (strain LB400), this protein is Ferrochelatase.